Reading from the N-terminus, the 1160-residue chain is Carbamoyl phosphate synthase arginine-specific large chain, mitochondrial (1160 aa).

Residues 81-478 (AEHEKVKKVV…SLQKALRQVD (398 aa)) form a carboxyphosphate synthetic domain region. ATP contacts are provided by Arg-208, Arg-248, Gly-254, Gly-255, Lys-285, Leu-287, Glu-292, Gly-318, Ile-319, His-320, Gln-361, and Glu-375. In terms of domain architecture, ATP-grasp 1 spans 212–404 (AKALNEINIP…LAYTAAKIAL (193 aa)). Gln-361, Glu-375, and Asn-377 together coordinate Mg(2+). 3 residues coordinate Mn(2+): Gln-361, Glu-375, and Asn-377. Residues 479-623 (PSFLGFMAMP…YTSYNASSHD (145 aa)) form an oligomerization domain region. Residues 624–1012 (IDFNEHGTMV…AYWAALQSTQ (389 aa)) are carbamoyl phosphate synthetic domain. An ATP-grasp 2 domain is found at 748–946 (SQILDKIGVD…FIDVATRSII (199 aa)). Positions 784, 823, 825, 830, 855, 856, 857, 858, 898, and 917 each coordinate ATP. Positions 898, 917, and 919 each coordinate Mg(2+). Residues Gln-898, Glu-917, and Asn-919 each coordinate Mn(2+). The tract at residues 1013 to 1144 (NFKIPLPGQG…PSVLSEKKEM (132 aa)) is allosteric domain. One can recognise an MGS-like domain in the interval 1014–1160 (FKIPLPGQGI…WSEWIGSHDL (147 aa)).

Belongs to the CarB family. In terms of assembly, heterodimer composed of 2 chains; the small (or glutamine) chain promotes the hydrolysis of glutamine to ammonia, which is used by the large (or ammonia) chain to synthesize carbamoyl phosphate. The cofactor is Mg(2+). Mn(2+) is required as a cofactor.

It localises to the mitochondrion. It catalyses the reaction hydrogencarbonate + L-glutamine + 2 ATP + H2O = carbamoyl phosphate + L-glutamate + 2 ADP + phosphate + 2 H(+). It carries out the reaction hydrogencarbonate + NH4(+) + 2 ATP = carbamoyl phosphate + 2 ADP + phosphate + 2 H(+). It functions in the pathway amino-acid biosynthesis; L-arginine biosynthesis; carbamoyl phosphate from bicarbonate: step 1/1. Large subunit of the arginine-specific carbamoyl phosphate synthase (CPSase). CPSase catalyzes the formation of carbamoyl phosphate from the ammonia moiety of glutamine, hydrogencarbonate, and phosphate donated by ATP, the first step of the arginine biosynthetic pathway. The large subunit (synthetase) binds the substrates ammonia (free or transferred from glutamine from the small subunit), hydrogencarbonate and ATP and carries out an ATP-coupled ligase reaction, activating hydrogencarbonate by forming carboxy phosphate which reacts with ammonia to form carbamoyl phosphate. The polypeptide is Carbamoyl phosphate synthase arginine-specific large chain, mitochondrial (arg4) (Schizosaccharomyces pombe (strain 972 / ATCC 24843) (Fission yeast)).